We begin with the raw amino-acid sequence, 412 residues long: Palmitoyltransferase ZDHHC6 (412 aa).

At 1–24 (MNILSAIIVFENLHEVKRLFHWGP) the chain is on the cytoplasmic side. The helical transmembrane segment at 25–45 (IIALTVIGVCSSMAILDSIIW) threads the bilayer. The Lumenal portion of the chain corresponds to 46–57 (YWPLDTTGGSIN). The helical transmembrane segment at 58-78 (FIMLINWTVLILYNYFNAMFV) threads the bilayer. Residues 79 to 143 (GPGYIPLEWK…NCCGHLNHAY (65 aa)) are Cytoplasmic-facing. The 51-residue stretch at 99-149 (QFCRLCQGYKAPRSHHCRKCNRCVMKMDHHCPWINNCCGHLNHAYFTSFLL) folds into the DHHC domain. The active-site S-palmitoyl cysteine intermediate is the Cys-129. The helical transmembrane segment at 144-164 (FTSFLLLAPLGCIHAALIFIM) threads the bilayer. The Lumenal portion of the chain corresponds to 165-205 (TMYTQLYDRISFGWSSVKIDMSAARHIHHPIMPFSIAAFAA). The chain crosses the membrane as a helical span at residues 206 to 226 (TLFALGLALGTTIAVGMLFFI). The Cytoplasmic portion of the chain corresponds to 227-412 (QMKVILRNRT…NSTSEEKKEQ (186 aa)). The 86-residue stretch at 313 to 398 (QRSVEYRVVE…PRRCVEKCLY (86 aa)) folds into the SH3 domain. S-palmitoyl cysteine attachment occurs at residues Cys-328, Cys-329, and Cys-343. The Di-lysine motif signature appears at 409-412 (KKEQ).

The protein belongs to the DHHC palmitoyltransferase family.

The protein resides in the endoplasmic reticulum membrane. The enzyme catalyses L-cysteinyl-[protein] + hexadecanoyl-CoA = S-hexadecanoyl-L-cysteinyl-[protein] + CoA. It carries out the reaction L-cysteinyl-[protein] + octadecanoyl-CoA = S-octadecanoyl-L-cysteinyl-[protein] + CoA. Endoplasmic reticulum palmitoyl acyltransferase that probably catalyzes the addition of palmitate onto various protein substrates and is involved in a variety of cellular processes. Could also function as a stearoyltransferase. In Danio rerio (Zebrafish), this protein is Palmitoyltransferase ZDHHC6.